The primary structure comprises 530 residues: Bifunctional purine biosynthesis protein PurH (530 aa).

The MGS-like domain maps to Met1 to Val148.

It belongs to the PurH family.

It catalyses the reaction (6R)-10-formyltetrahydrofolate + 5-amino-1-(5-phospho-beta-D-ribosyl)imidazole-4-carboxamide = 5-formamido-1-(5-phospho-D-ribosyl)imidazole-4-carboxamide + (6S)-5,6,7,8-tetrahydrofolate. The catalysed reaction is IMP + H2O = 5-formamido-1-(5-phospho-D-ribosyl)imidazole-4-carboxamide. Its pathway is purine metabolism; IMP biosynthesis via de novo pathway; 5-formamido-1-(5-phospho-D-ribosyl)imidazole-4-carboxamide from 5-amino-1-(5-phospho-D-ribosyl)imidazole-4-carboxamide (10-formyl THF route): step 1/1. It functions in the pathway purine metabolism; IMP biosynthesis via de novo pathway; IMP from 5-formamido-1-(5-phospho-D-ribosyl)imidazole-4-carboxamide: step 1/1. The polypeptide is Bifunctional purine biosynthesis protein PurH (Vibrio cholerae serotype O1 (strain M66-2)).